The chain runs to 136 residues: Gilles de la Tourette syndrome chromosomal region candidate gene 1 protein (136 aa).

The helical transmembrane segment at 73-93 (AICMEVFLFLWFIAPIYACVC) threads the bilayer.

Its subcellular location is the membrane. This chain is Gilles de la Tourette syndrome chromosomal region candidate gene 1 protein (GTSCR1), found in Homo sapiens (Human).